The primary structure comprises 538 residues: Nicotinate phosphoribosyltransferase (538 aa).

Y21 and T210 together coordinate nicotinate. H213 carries the phosphohistidine modification. Position 318 (R318) interacts with nicotinate. T380 is a 5-phospho-alpha-D-ribose 1-diphosphate binding site.

It belongs to the NAPRTase family. Homodimer. It depends on Mg(2+) as a cofactor. Mn(2+) serves as cofactor. In terms of processing, transiently phosphorylated on a His residue during the reaction cycle. Phosphorylation strongly increases the affinity for substrates and increases the rate of nicotinate D-ribonucleotide production. Dephosphorylation regenerates the low-affinity form of the enzyme, leading to product release. Abundantly expressed in the small intestine, liver and kidney.

It localises to the cytoplasm. Its subcellular location is the cytosol. The enzyme catalyses nicotinate + 5-phospho-alpha-D-ribose 1-diphosphate + ATP + H2O = nicotinate beta-D-ribonucleotide + ADP + phosphate + diphosphate. It participates in cofactor biosynthesis; NAD(+) biosynthesis; nicotinate D-ribonucleotide from nicotinate: step 1/1. In terms of biological role, catalyzes the first step in the biosynthesis of NAD from nicotinic acid, the ATP-dependent synthesis of beta-nicotinate D-ribonucleotide from nicotinate and 5-phospho-D-ribose 1-phosphate. Helps prevent cellular oxidative stress via its role in NAD biosynthesis. This is Nicotinate phosphoribosyltransferase (Naprt) from Mus musculus (Mouse).